The following is a 122-amino-acid chain: Proteasome assembly chaperone 3 (122 aa).

The residue at position 1 (Met1) is an N-acetylmethionine.

This sequence belongs to the PSMG3 family. In terms of assembly, homodimer. Interacts with PSMG4. Interacts directly with alpha and beta subunits of the 20S proteasome but dissociates before the formation of half-proteasomes, probably upon recruitment of POMP.

Its function is as follows. Chaperone protein which promotes assembly of the 20S proteasome. May cooperate with PSMG1-PSMG2 heterodimers to orchestrate the correct assembly of proteasomes. The protein is Proteasome assembly chaperone 3 of Homo sapiens (Human).